The sequence spans 148 residues: Putative nickel-responsive regulator (148 aa).

Histidine 88, histidine 99, histidine 101, and cysteine 107 together coordinate Ni(2+).

It belongs to the transcriptional regulatory CopG/NikR family. Homotetramer. Ni(2+) serves as cofactor.

Functionally, transcriptional regulator. The protein is Putative nickel-responsive regulator of Helicobacter pylori (strain ATCC 700392 / 26695) (Campylobacter pylori).